Consider the following 99-residue polypeptide: Ferredoxin-2 (99 aa).

Positions 4 to 96 (YQVRLINKKR…DCTIRTHQEA (93 aa)) constitute a 2Fe-2S ferredoxin-type domain. Cysteine 42, cysteine 47, cysteine 50, and cysteine 80 together coordinate [2Fe-2S] cluster.

Belongs to the 2Fe2S plant-type ferredoxin family. Requires [2Fe-2S] cluster as cofactor.

Its function is as follows. Ferredoxins are iron-sulfur proteins that transfer electrons in a wide variety of metabolic reactions. Donates electrons to the nitrogenase. In Leptolyngbya boryana (Plectonema boryanum), this protein is Ferredoxin-2 (fdxH).